The chain runs to 51 residues: Lipid-anchored plasma membrane protein CPP3 (51 aa).

Positions 1-28 are disordered; that stretch reads MRHHQNMHYAPQQQPVYVQQPPPRRESG.

Belongs to the CYSTM1 family. Palmitoylated near the C-terminus.

Its subcellular location is the cell membrane. This chain is Lipid-anchored plasma membrane protein CPP3, found in Saccharomyces cerevisiae (strain ATCC 204508 / S288c) (Baker's yeast).